The chain runs to 129 residues: Selenoprotein M (129 aa).

The signal sequence occupies residues 1–19 (MARGLAVFFLLAGACLALA). Active-site nucleophile residues include Cys35 and Sec38. A non-standard amino acid (selenocysteine) is located at residue Sec38. The disordered stretch occupies residues 107 to 129 (KSSKDEQVPEEYQEGPYMEKEEL). The Prevents secretion from ER signature appears at 126–129 (KEEL).

This sequence belongs to the selenoprotein M/F family. In terms of tissue distribution, high expression levels observed in hepatopancreas, testis, ovaries and intestine. Also expressed in heart, stomach, gills, cranial ganglia, muscle and hematocytes.

The protein localises to the endoplasmic reticulum. May function as a thiol-disulfide oxidoreductase that participates in disulfide bond formation. Involved in the regulation of reproduction during the period of rapid gonadal development. This Eriocheir sinensis (Chinese mitten crab) protein is Selenoprotein M.